The sequence spans 285 residues: Orotidine 5'-phosphate decarboxylase (285 aa).

Substrate-binding positions include Asp-40, 62–64 (KTH), 93–102 (DRKFVDIGST), Tyr-235, and Arg-253. Lys-95 functions as the Proton donor in the catalytic mechanism.

Belongs to the OMP decarboxylase family.

The enzyme catalyses orotidine 5'-phosphate + H(+) = UMP + CO2. It participates in pyrimidine metabolism; UMP biosynthesis via de novo pathway; UMP from orotate: step 2/2. The protein is Orotidine 5'-phosphate decarboxylase (URA3) of Paracoccidioides brasiliensis.